The chain runs to 127 residues: Small ribosomal subunit protein uS11 (127 aa).

This sequence belongs to the universal ribosomal protein uS11 family. As to quaternary structure, part of the 30S ribosomal subunit. Interacts with proteins S7 and S18. Binds to IF-3.

Located on the platform of the 30S subunit, it bridges several disparate RNA helices of the 16S rRNA. Forms part of the Shine-Dalgarno cleft in the 70S ribosome. In Chlorobium chlorochromatii (strain CaD3), this protein is Small ribosomal subunit protein uS11.